We begin with the raw amino-acid sequence, 479 residues long: MNFETIIGLEVHAELNTNSKIFSPSSAHFGEDPNANTNVIDWSFPGVLPVMNKGVIDASIKAALALNMDIHKEMHFDRKNYFYPDNPKAYQISQFDEPVGYNGWIEIKLEDGSTKKIRIERAHLEEDAGKNTHGTDGYSYVDLNRQGVPLIEIVSEADMRSPEEAYAYLTALKEIIQYTGISDVKMEEGSMRVDANISLRPYGQEQFGTKTELKNLNSFSNVRKGLEFEVERQAKLLRSGGVIRQETRRYDEANKGTILMRVKEGAADYRYFPEPDLPLYEIDDAWIDEMRAQLPQFPAQRRAKYEEELGLSAYDASQLTATKVLSDFFETAVSLGGDAKQVSNWLQGEIAQFLNAEGKTIEEIALTPENLVEMIAIIADGTISSKMAKKVFVHLAKNGGSARAYVEKAGLVQISDPAVLVPIIHQVFADNEAAVADFKSGKRNADKAFTGFLMKATKGQANPQVAQQLLAQELQKLRD.

It belongs to the GatB/GatE family. GatB subfamily. In terms of assembly, heterotrimer of A, B and C subunits.

The enzyme catalyses L-glutamyl-tRNA(Gln) + L-glutamine + ATP + H2O = L-glutaminyl-tRNA(Gln) + L-glutamate + ADP + phosphate + H(+). The catalysed reaction is L-aspartyl-tRNA(Asn) + L-glutamine + ATP + H2O = L-asparaginyl-tRNA(Asn) + L-glutamate + ADP + phosphate + 2 H(+). Allows the formation of correctly charged Asn-tRNA(Asn) or Gln-tRNA(Gln) through the transamidation of misacylated Asp-tRNA(Asn) or Glu-tRNA(Gln) in organisms which lack either or both of asparaginyl-tRNA or glutaminyl-tRNA synthetases. The reaction takes place in the presence of glutamine and ATP through an activated phospho-Asp-tRNA(Asn) or phospho-Glu-tRNA(Gln). The sequence is that of Aspartyl/glutamyl-tRNA(Asn/Gln) amidotransferase subunit B from Streptococcus pyogenes serotype M6 (strain ATCC BAA-946 / MGAS10394).